A 129-amino-acid chain; its full sequence is MNLIQQLEAEQIAKFKESKSIPDFRPGDTLRVGVKVVEGERTRVQAYEGVCIARANKGMGSSFTVRKISFGEGVERVFPLYSPNVESIEVVRKGVVRRAKLYYLRGRRGKSARIAERRDNKPAAEAQEA.

This sequence belongs to the bacterial ribosomal protein bL19 family.

This protein is located at the 30S-50S ribosomal subunit interface and may play a role in the structure and function of the aminoacyl-tRNA binding site. The chain is Large ribosomal subunit protein bL19 from Rhizorhabdus wittichii (strain DSM 6014 / CCUG 31198 / JCM 15750 / NBRC 105917 / EY 4224 / RW1) (Sphingomonas wittichii).